The sequence spans 277 residues: SPX domain-containing protein 3 (277 aa).

One can recognise an SPX domain in the interval 1–152; that stretch reads MKFGKRLKKQ…GRLLRLPFIE (152 aa).

The chain is SPX domain-containing protein 3 (SPX3) from Oryza sativa subsp. indica (Rice).